The sequence spans 125 residues: Large ribosomal subunit protein bL12 (125 aa).

It belongs to the bacterial ribosomal protein bL12 family. As to quaternary structure, homodimer. Part of the ribosomal stalk of the 50S ribosomal subunit. Forms a multimeric L10(L12)X complex, where L10 forms an elongated spine to which 2 to 4 L12 dimers bind in a sequential fashion. Binds GTP-bound translation factors.

Its function is as follows. Forms part of the ribosomal stalk which helps the ribosome interact with GTP-bound translation factors. Is thus essential for accurate translation. This chain is Large ribosomal subunit protein bL12, found in Coprothermobacter proteolyticus (strain ATCC 35245 / DSM 5265 / OCM 4 / BT).